Reading from the N-terminus, the 223-residue chain is DNA mismatch repair protein MutH (223 aa).

The protein belongs to the MutH family.

Its subcellular location is the cytoplasm. Functionally, sequence-specific endonuclease that cleaves unmethylated GATC sequences. It is involved in DNA mismatch repair. This chain is DNA mismatch repair protein MutH, found in Shewanella sp. (strain MR-4).